Here is a 435-residue protein sequence, read N- to C-terminus: Citrate synthase (435 aa).

Active-site residues include H311 and D370.

The protein belongs to the citrate synthase family. Homohexamer.

It catalyses the reaction oxaloacetate + acetyl-CoA + H2O = citrate + CoA + H(+). It participates in carbohydrate metabolism; tricarboxylic acid cycle; isocitrate from oxaloacetate: step 1/2. The chain is Citrate synthase (gltA) from Rickettsia africae (strain ESF-5).